We begin with the raw amino-acid sequence, 75 residues long: Small ribosomal subunit protein bS18 (75 aa).

It belongs to the bacterial ribosomal protein bS18 family. In terms of assembly, part of the 30S ribosomal subunit. Forms a tight heterodimer with protein bS6.

Its function is as follows. Binds as a heterodimer with protein bS6 to the central domain of the 16S rRNA, where it helps stabilize the platform of the 30S subunit. The chain is Small ribosomal subunit protein bS18 from Buchnera aphidicola subsp. Baizongia pistaciae (strain Bp).